Here is a 328-residue protein sequence, read N- to C-terminus: Ribosomal RNA small subunit methyltransferase H (328 aa).

Residues 37–39, Asp57, Phe83, Asp104, and Gln111 each bind S-adenosyl-L-methionine; that span reads GGH.

The protein belongs to the methyltransferase superfamily. RsmH family.

It is found in the cytoplasm. It carries out the reaction cytidine(1402) in 16S rRNA + S-adenosyl-L-methionine = N(4)-methylcytidine(1402) in 16S rRNA + S-adenosyl-L-homocysteine + H(+). Specifically methylates the N4 position of cytidine in position 1402 (C1402) of 16S rRNA. This chain is Ribosomal RNA small subunit methyltransferase H, found in Neisseria meningitidis serogroup A / serotype 4A (strain DSM 15465 / Z2491).